The following is a 379-amino-acid chain: Glucose-1-phosphate adenylyltransferase (379 aa).

Residues Gly164, 179–180 (EK), and Ser190 contribute to the alpha-D-glucose 1-phosphate site.

It belongs to the bacterial/plant glucose-1-phosphate adenylyltransferase family. As to quaternary structure, homotetramer.

It carries out the reaction alpha-D-glucose 1-phosphate + ATP + H(+) = ADP-alpha-D-glucose + diphosphate. The protein operates within glycan biosynthesis; glycogen biosynthesis. In terms of biological role, involved in the biosynthesis of ADP-glucose, a building block required for the elongation reactions to produce glycogen. Catalyzes the reaction between ATP and alpha-D-glucose 1-phosphate (G1P) to produce pyrophosphate and ADP-Glc. This chain is Glucose-1-phosphate adenylyltransferase, found in Streptococcus uberis (strain ATCC BAA-854 / 0140J).